The chain runs to 514 residues: Peptide chain release factor 3 (514 aa).

The region spanning 8–268 (KKRRTFAIIS…TFLEFAPEPH (261 aa)) is the tr-type G domain. GTP is bound by residues 17–24 (SHPDAGKT), 85–89 (DTPGH), and 139–142 (NKLD).

Belongs to the TRAFAC class translation factor GTPase superfamily. Classic translation factor GTPase family. PrfC subfamily.

It localises to the cytoplasm. Increases the formation of ribosomal termination complexes and stimulates activities of RF-1 and RF-2. It binds guanine nucleotides and has strong preference for UGA stop codons. It may interact directly with the ribosome. The stimulation of RF-1 and RF-2 is significantly reduced by GTP and GDP, but not by GMP. The protein is Peptide chain release factor 3 of Streptococcus pyogenes serotype M1.